The following is an 85-amino-acid chain: Small ribosomal subunit protein bS20 (85 aa).

Belongs to the bacterial ribosomal protein bS20 family.

Functionally, binds directly to 16S ribosomal RNA. This is Small ribosomal subunit protein bS20 from Borrelia garinii subsp. bavariensis (strain ATCC BAA-2496 / DSM 23469 / PBi) (Borreliella bavariensis).